The sequence spans 238 residues: Uridylate kinase (238 aa).

Residue 12 to 15 (KLSG) participates in ATP binding. UMP is bound at residue Gly54. Residues Gly55 and Arg59 each coordinate ATP. UMP-binding positions include Asp74 and 135–142 (TGNPFFTT). ATP-binding residues include Thr162, Tyr168, and Asp171.

This sequence belongs to the UMP kinase family. Homohexamer.

Its subcellular location is the cytoplasm. It carries out the reaction UMP + ATP = UDP + ADP. It participates in pyrimidine metabolism; CTP biosynthesis via de novo pathway; UDP from UMP (UMPK route): step 1/1. With respect to regulation, inhibited by UTP. Its function is as follows. Catalyzes the reversible phosphorylation of UMP to UDP. This Dechloromonas aromatica (strain RCB) protein is Uridylate kinase.